Here is a 212-residue protein sequence, read N- to C-terminus: MSSTYFHSSLLAATLFSVTLTAPAFASENTQNTPQTITTKKPQPAENTFSEKNEESYWGKFKRNLTQTWDNDQYNYYLPVWTWHNRFTYDKEKTNRYNETPWGFGMGKYRYDNEGDWHGLYAMAFMDSNNRVQPIMGYGFEKMWYPGGDREGFRMGAGFTLSVTARHEYNYIPMPLPLPLVSVGYEHLSLQATYVPGTYNNGNVLFAWLRWQ.

A signal peptide spans 1–26 (MSSTYFHSSLLAATLFSVTLTAPAFA). Over residues 29–44 (NTQNTPQTITTKKPQP) the composition is skewed to low complexity. A disordered region spans residues 29–50 (NTQNTPQTITTKKPQPAENTFS). Catalysis depends on residues H84, D127, and S128.

It belongs to the lipid A palmitoyltransferase family. As to quaternary structure, homodimer.

The protein resides in the cell outer membrane. It carries out the reaction a lipid A + a 1,2-diacyl-sn-glycero-3-phosphocholine = a hepta-acyl lipid A + a 2-acyl-sn-glycero-3-phosphocholine. It catalyses the reaction a lipid IVA + a 1,2-diacyl-sn-glycero-3-phosphocholine = a lipid IVB + a 2-acyl-sn-glycero-3-phosphocholine. The catalysed reaction is a lipid IIA + a 1,2-diacyl-sn-glycero-3-phosphocholine = a lipid IIB + a 2-acyl-sn-glycero-3-phosphocholine. Transfers a fatty acid residue from the sn-1 position of a phospholipid to the N-linked hydroxyfatty acid chain on the proximal unit of lipid A or its precursors. This is Lipid A acyltransferase PagP from Proteus mirabilis (strain HI4320).